We begin with the raw amino-acid sequence, 484 residues long: Probable glycine dehydrogenase (decarboxylating) subunit 2 (484 aa).

N6-(pyridoxal phosphate)lysine is present on K270.

It belongs to the GcvP family. C-terminal subunit subfamily. As to quaternary structure, the glycine cleavage system is composed of four proteins: P, T, L and H. In this organism, the P 'protein' is a heterodimer of two subunits. The cofactor is pyridoxal 5'-phosphate.

The catalysed reaction is N(6)-[(R)-lipoyl]-L-lysyl-[glycine-cleavage complex H protein] + glycine + H(+) = N(6)-[(R)-S(8)-aminomethyldihydrolipoyl]-L-lysyl-[glycine-cleavage complex H protein] + CO2. Functionally, the glycine cleavage system catalyzes the degradation of glycine. The P protein binds the alpha-amino group of glycine through its pyridoxal phosphate cofactor; CO(2) is released and the remaining methylamine moiety is then transferred to the lipoamide cofactor of the H protein. The polypeptide is Probable glycine dehydrogenase (decarboxylating) subunit 2 (Desulforamulus reducens (strain ATCC BAA-1160 / DSM 100696 / MI-1) (Desulfotomaculum reducens)).